We begin with the raw amino-acid sequence, 394 residues long: MFLLKIKKERMKRMDFSLTREQEMLKKLARQFAEIELEPVAEEIDREHVFPAENFKKMAEIGLTGIGIPKEFGGSGGGTLEKVIAVSEFGKKCMASASILSIHLIAPQAIYKYGTKEQKETYLPRLTKGGELGAFALTEPNAGSDAGAVKTTAILDSQTNEYVLNGTKCFISGGGRAGVLVIFALTEPKKGLKGMSAIIVEKGTPGFSIGKVESKMGIAGSETAELIFEDCRVPAANLLGKEGKGFKIAMEALDGARIGVGAQAIGIAEGAIDLSVKYVHERIQFGKPIANLQGIQWYIADMATKTAAARALVEFAAYLEDAGKPFTKESAMCKLNASENARFVTNLALQIHGGYGYMKDYPLERMYRDAKITEIYEGTSEIHKVVIAREVMKR.

Residues 135 to 144 (FALTEPNAGS) and 170 to 172 (FIS) each bind FAD. Residue Ser-144 coordinates substrate. Residue 254–257 (DGAR) participates in substrate binding. FAD-binding positions include Arg-282, Gln-293, and 350–354 (QIHGG). The Proton acceptor role is filled by Glu-377. Gly-378 lines the substrate pocket. 379–381 (TSE) is an FAD binding site.

As to quaternary structure, heterohexadecamer; tetramer of tetramers. Each tetramer is composed of 2 alpha (AcrC), a beta (AcrA) and a gamma (AcrB) subunit. It depends on FAD as a cofactor.

The protein resides in the cytoplasm. The enzyme catalyses propanoyl-CoA + NAD(+) = acryloyl-CoA + NADH + H(+). Its function is as follows. Probable catalytic subunit of the acryloyl-CoA reductase complex involved in the pathway of L-alanine fermentation. Catalyzes the irreversible NADH-dependent formation of propionyl-CoA from acryloyl-CoA. It can also use 3-buten-2-one as substrate. This Anaerotignum propionicum (Clostridium propionicum) protein is Acryloyl-CoA reductase (NADH) (acrC).